Consider the following 75-residue polypeptide: Calhepatin (75 aa).

Ser1 is modified (N-acetylserine). EF-hand domains follow at residues 2-37 (ADEQKLRERFEALDKDKSGTLSVDELYEGVHAVHPK) and 38-73 (VSRNDIVKIIEKVDTNKDGQVSWQEFIEAFKRLADL). Ca(2+)-binding residues include Asp15, Asp17, Ser19, Thr21, Glu26, Asp51, Asn53, Asp55, Gln57, and Glu62.

Monomer and homodimer. As to expression, liver, and to a much lower level intestine.

Binds both calcium and copper, but not zinc. May be involved in calcium signal transduction. This Lepidosiren paradoxus (South American lungfish) protein is Calhepatin.